A 459-amino-acid chain; its full sequence is MIKDPFERLGLDREVLTVSQLNGRARVLLEDVFRSVWVEGEISNLARPASGHMYFTLKDSGAQIRCALFRQNALRVRQALRDGLAVRVRGKVSLFEGRGDYQLILDTVEPAGDGALRLAFEALKEKLGAEGLFSTERKRPLPAHPQRIGIITSPTGAVIRDIISVFRRRAPQVELNLIPTAVQGREAINQIVRALQMADRQGFDALILARGGGSLEDLWCFNEEAVARAVAACVTPIVSAVGHETDVSISDFVADVRAPTPSAAAELLAPDSSGLQQRLDSLQRRLLLRMQSRLAHDRLRVEGLARRLRHPGERLRQQAQRLDDLDMRLRRAFALNMNQRHERLGRLDTRLAAQHPGRSLKLLKQRLDSLAERLPKAMRDVLKDRRQRFQAQLQTLQVVSPLATLARGYSILLDEHGQAIRSAAQTHNGQRLTARLNEGELKVRVEDNHQTPVTLSLLD.

It belongs to the XseA family. Heterooligomer composed of large and small subunits.

It localises to the cytoplasm. The enzyme catalyses Exonucleolytic cleavage in either 5'- to 3'- or 3'- to 5'-direction to yield nucleoside 5'-phosphates.. Functionally, bidirectionally degrades single-stranded DNA into large acid-insoluble oligonucleotides, which are then degraded further into small acid-soluble oligonucleotides. The sequence is that of Exodeoxyribonuclease 7 large subunit from Pseudomonas entomophila (strain L48).